The following is a 316-amino-acid chain: Apolipoprotein E (316 aa).

Residues 1–18 (MKVLWVALVITLLAGCQA) form the signal peptide. 8 consecutive repeat copies span residues 79–100 (VLMD…GQLG), 101–122 (PIAQ…ARLA), 123–144 (SDME…ALMG), 145–166 (QTTD…KRLL), 167–188 (RDAE…EGSE), 189–210 (RSVS…VRAA), 211–232 (TVGT…QKLR), and 233–254 (GRME…EQLE). Residues 79–254 (VLMDETMKEV…HLEEMREQLE (176 aa)) are 8 X 22 AA approximate tandem repeats. The segment at 157-167 (HLRKLRKRLLR) is LDL and other lipoprotein receptors binding. Position 161 to 164 (161 to 164 (LRKR)) interacts with heparin. The interval 209–289 (AATVGTLASQ…SWFEPLVEDM (81 aa)) is lipid-binding and lipoprotein association. Heparin is bound at residue 228 to 235 (HQKLRGRM). Residues 265–316 (SQMRLQAEAFQARLKSWFEPLVEDMQRQWAGLVEKVQLAMATGPTSAPIENN) are homooligomerization. The tract at residues 277–289 (RLKSWFEPLVEDM) is specificity for association with VLDL.

It belongs to the apolipoprotein A1/A4/E family. Homotetramer. May interact with ABCA1; functionally associated with ABCA1 in the biogenesis of HDLs. May interact with APP/A4 amyloid-beta peptide; the interaction is extremely stable in vitro but its physiological significance is unclear. May interact with MAPT. May interact with MAP2. In the cerebrospinal fluid, interacts with secreted SORL1. Interacts with PMEL; this allows the loading of PMEL luminal fragment on ILVs to induce fibril nucleation. APOE exists as multiple glycosylated and sialylated glycoforms within cells and in plasma. The extent of glycosylation and sialylation are tissue and context specific. Post-translationally, glycated in plasma VLDL. In terms of processing, phosphorylated by FAM20C in the extracellular medium.

Its subcellular location is the secreted. The protein localises to the extracellular space. It is found in the extracellular matrix. It localises to the extracellular vesicle. The protein resides in the endosome. Its subcellular location is the multivesicular body. APOE is an apolipoprotein, a protein associating with lipid particles, that mainly functions in lipoprotein-mediated lipid transport between organs via the plasma and interstitial fluids. APOE is a core component of plasma lipoproteins and is involved in their production, conversion and clearance. Apolipoproteins are amphipathic molecules that interact both with lipids of the lipoprotein particle core and the aqueous environment of the plasma. As such, APOE associates with chylomicrons, chylomicron remnants, very low density lipoproteins (VLDL) and intermediate density lipoproteins (IDL) but shows a preferential binding to high-density lipoproteins (HDL). It also binds a wide range of cellular receptors including the LDL receptor/LDLR and the very low-density lipoprotein receptor/VLDLR that mediate the cellular uptake of the APOE-containing lipoprotein particles. Finally, APOE also has a heparin-binding activity and binds heparan-sulfate proteoglycans on the surface of cells, a property that supports the capture and the receptor-mediated uptake of APOE-containing lipoproteins by cells. The protein is Apolipoprotein E (APOE) of Tursiops truncatus (Atlantic bottle-nosed dolphin).